Here is a 61-residue protein sequence, read N- to C-terminus: Small ribosomal subunit protein uS14 (61 aa).

Zn(2+)-binding residues include Cys-24, Cys-27, Cys-40, and Cys-43.

It belongs to the universal ribosomal protein uS14 family. Zinc-binding uS14 subfamily. In terms of assembly, part of the 30S ribosomal subunit. Contacts proteins S3 and S10. It depends on Zn(2+) as a cofactor.

In terms of biological role, binds 16S rRNA, required for the assembly of 30S particles and may also be responsible for determining the conformation of the 16S rRNA at the A site. The polypeptide is Small ribosomal subunit protein uS14 (Pelobacter propionicus (strain DSM 2379 / NBRC 103807 / OttBd1)).